Here is a 201-residue protein sequence, read N- to C-terminus: Aminoglycoside N(6')-acetyltransferase type 1 (201 aa).

Residues 25 to 192 form the N-acetyltransferase domain; that stretch reads VTLRLMTEHD…PAVYMVQTRQ (168 aa). The substrate site is built by W51 and D154. N159 is a binding site for acetyl-CoA.

Homodimer.

It carries out the reaction kanamycin B + acetyl-CoA = N(6')-acetylkanamycin B + CoA + H(+). Its function is as follows. Catalyzes the transfer of an acetyl group from acetyl-CoA to the 6'-amino group of aminoglycoside molecules conferring resistance to antibiotics containing the purpurosamine ring including amikacin. This chain is Aminoglycoside N(6')-acetyltransferase type 1 (aacA4), found in Klebsiella pneumoniae.